A 468-amino-acid polypeptide reads, in one-letter code: ATP synthase subunit beta (468 aa).

155–162 (GGAGVGKT) contributes to the ATP binding site.

Belongs to the ATPase alpha/beta chains family. As to quaternary structure, F-type ATPases have 2 components, CF(1) - the catalytic core - and CF(0) - the membrane proton channel. CF(1) has five subunits: alpha(3), beta(3), gamma(1), delta(1), epsilon(1). CF(0) has three main subunits: a(1), b(2) and c(9-12). The alpha and beta chains form an alternating ring which encloses part of the gamma chain. CF(1) is attached to CF(0) by a central stalk formed by the gamma and epsilon chains, while a peripheral stalk is formed by the delta and b chains.

Its subcellular location is the cell membrane. It carries out the reaction ATP + H2O + 4 H(+)(in) = ADP + phosphate + 5 H(+)(out). Produces ATP from ADP in the presence of a proton gradient across the membrane. The catalytic sites are hosted primarily by the beta subunits. This Streptococcus equi subsp. zooepidemicus (strain H70) protein is ATP synthase subunit beta.